Consider the following 476-residue polypeptide: MNFETTIGLEVHVELKTKSKMFSPSPVTYGQEPNTQTNVIDWGFPGVLPSINRGAYQLGIMVGLALHADITRLTHFDRKNYFYPDNPKAYQITQSEKPLGTNGWVEIEVDGKKKKIGIAELHVEEDAGKNQHEDDGYSYVDLNRQGTPLVEIVSKPDITSPEEAYAYLETLRQIVQFTGASDVKMEEGSMRVDTNLSVRPIGQEHFGIKTEIKNLNSFVHVRDGLAFEEKRQQAVLLSGGEVRQETRRWDPDAKETLLMRVKEGADDYRYFPEPDLPPVAVSQKWIDDIQASLPQPPAERRQRYIEDWGIPAYDAGVLTQTKEMSDFFEATVAQGADAKQASNWLMGEVSGFLNAQHVELGQVALTPAHLAGMIKLIGDGTISSKMAKKVFKEIIQHDTDPDKWVHEKGLIQLSDPAKLTPIIDEILDNNQQSIDDFKAGKDRAIGFLVGQIMKQTHGQANPKVVNQILMAEIKQR.

This sequence belongs to the GatB/GatE family. GatB subfamily. As to quaternary structure, heterotrimer of A, B and C subunits.

It carries out the reaction L-glutamyl-tRNA(Gln) + L-glutamine + ATP + H2O = L-glutaminyl-tRNA(Gln) + L-glutamate + ADP + phosphate + H(+). The catalysed reaction is L-aspartyl-tRNA(Asn) + L-glutamine + ATP + H2O = L-asparaginyl-tRNA(Asn) + L-glutamate + ADP + phosphate + 2 H(+). Its function is as follows. Allows the formation of correctly charged Asn-tRNA(Asn) or Gln-tRNA(Gln) through the transamidation of misacylated Asp-tRNA(Asn) or Glu-tRNA(Gln) in organisms which lack either or both of asparaginyl-tRNA or glutaminyl-tRNA synthetases. The reaction takes place in the presence of glutamine and ATP through an activated phospho-Asp-tRNA(Asn) or phospho-Glu-tRNA(Gln). This Lacticaseibacillus paracasei (strain ATCC 334 / BCRC 17002 / CCUG 31169 / CIP 107868 / KCTC 3260 / NRRL B-441) (Lactobacillus paracasei) protein is Aspartyl/glutamyl-tRNA(Asn/Gln) amidotransferase subunit B.